We begin with the raw amino-acid sequence, 426 residues long: Serine/threonine-protein kinase ssn3 (426 aa).

In terms of domain architecture, Protein kinase spans 41 to 368 (YHIVGFISSG…AREALEHPYF (328 aa)). ATP-binding positions include 47–55 (ISSGTYGRV) and lysine 71. Aspartate 173 (proton acceptor) is an active-site residue. A disordered region spans residues 390 to 426 (RVTQDDNDIRSGSLPGTKRSGLPDDSLMGRAAKRLKE).

This sequence belongs to the protein kinase superfamily. CMGC Ser/Thr protein kinase family. CDC2/CDKX subfamily. In terms of assembly, component of the srb8-11 complex, a regulatory module of the Mediator complex. Requires Mg(2+) as cofactor.

The protein localises to the nucleus. It carries out the reaction L-seryl-[protein] + ATP = O-phospho-L-seryl-[protein] + ADP + H(+). The enzyme catalyses L-threonyl-[protein] + ATP = O-phospho-L-threonyl-[protein] + ADP + H(+). The catalysed reaction is [DNA-directed RNA polymerase] + ATP = phospho-[DNA-directed RNA polymerase] + ADP + H(+). In terms of biological role, component of the srb8-11 complex. The srb8-11 complex is a regulatory module of the Mediator complex which is itself dependent transcription. The srb8-11 complex may be involved in the transcriptional repression of a subset of genes regulated by Mediator. It may inhibit the association of the Mediator complex with RNA polymerase II to form the holoenzyme complex. The srb8-11 complex phosphorylates the C-terminal domain (CTD) of the largest subunit of RNA polymerase II. In Neosartorya fischeri (strain ATCC 1020 / DSM 3700 / CBS 544.65 / FGSC A1164 / JCM 1740 / NRRL 181 / WB 181) (Aspergillus fischerianus), this protein is Serine/threonine-protein kinase ssn3 (ssn3).